A 481-amino-acid chain; its full sequence is Betaine aldehyde dehydrogenase 2 (481 aa).

K(+)-binding residues include Ser29 and Asp96. NAD(+) is bound at residue 152 to 154 (GAW). Lys164 acts as the Charge relay system in catalysis. 178–181 (KPSE) contacts NAD(+). Position 182 (Val182) interacts with K(+). 231–234 (SVKT) serves as a coordination point for NAD(+). Ile246 lines the K(+) pocket. Glu252 (proton acceptor) is an active-site residue. Residues Gly254, Cys286, and Glu383 each contribute to the NAD(+) site. Cys286 (nucleophile) is an active-site residue. Residue Cys286 is modified to Cysteine sulfenic acid (-SOH). Positions 453 and 456 each coordinate K(+). Catalysis depends on Glu460, which acts as the Charge relay system.

This sequence belongs to the aldehyde dehydrogenase family. Dimer of dimers. It depends on K(+) as a cofactor.

The catalysed reaction is betaine aldehyde + NAD(+) + H2O = glycine betaine + NADH + 2 H(+). It participates in amine and polyamine biosynthesis; betaine biosynthesis via choline pathway; betaine from betaine aldehyde: step 1/1. In terms of biological role, involved in the biosynthesis of the osmoprotectant glycine betaine. Catalyzes the irreversible oxidation of betaine aldehyde to the corresponding acid. In Rhizobium meliloti (strain 1021) (Ensifer meliloti), this protein is Betaine aldehyde dehydrogenase 2.